Consider the following 136-residue polypeptide: Transmembrane protein 203 (136 aa).

An interaction with STING1 region spans residues M1–V51. 4 consecutive transmembrane segments (helical) span residues F14–A34, F50–F72, V81–L101, and L112–A132. Residues P52–N136 form a required for lysosomal localization of the STING-TMEM203 complex region.

As to quaternary structure, homodimer. Interacts with ATP2A2 and ITPR3. Interacts with STIM1 and STING1 (via transmembrane domain).

The protein resides in the endoplasmic reticulum membrane. It is found in the endoplasmic reticulum-Golgi intermediate compartment. It localises to the lysosome membrane. Functionally, involved in the regulation of cellular calcium homeotasis. Required for spermatogenesis. Acts as a regulator of STING-mediated inflammatory signaling in macrophages. Forms a complex with STING, promoting the activity of TBK1 kinase and the transcription factor IRF3, leading to activation of type I interferon expression. The chain is Transmembrane protein 203 (Tmem203) from Mus musculus (Mouse).